The sequence spans 351 residues: Methionine import ATP-binding protein MetN (351 aa).

The region spanning 2-241 is the ABC transporter domain; that stretch reads IELRNVTKTY…PKTEIAKKFT (240 aa). 38-45 is an ATP binding site; it reads GKSGAGKS.

Belongs to the ABC transporter superfamily. Methionine importer (TC 3.A.1.24) family. In terms of assembly, the complex is composed of two ATP-binding proteins (MetN), two transmembrane proteins (MetI) and a solute-binding protein (MetQ).

Its subcellular location is the cell inner membrane. The catalysed reaction is L-methionine(out) + ATP + H2O = L-methionine(in) + ADP + phosphate + H(+). It catalyses the reaction D-methionine(out) + ATP + H2O = D-methionine(in) + ADP + phosphate + H(+). Part of the ABC transporter complex MetNIQ involved in methionine import. Responsible for energy coupling to the transport system. The chain is Methionine import ATP-binding protein MetN from Coxiella burnetii (strain RSA 493 / Nine Mile phase I).